The primary structure comprises 123 residues: Fluoride-specific ion channel FluC 2 (123 aa).

A run of 3 helical transmembrane segments spans residues 30-50 (FPLPTLMINVLGALLLGFVAG), 68-88 (VGFIGSFTTFSTWSVDTVLLL), and 93-113 (WPLALANVGISLAVGLAAVWV). Na(+) is bound by residues G72 and T75.

It belongs to the fluoride channel Fluc/FEX (TC 1.A.43) family.

It is found in the cell membrane. The catalysed reaction is fluoride(in) = fluoride(out). Its activity is regulated as follows. Na(+) is not transported, but it plays an essential structural role and its presence is essential for fluoride channel function. In terms of biological role, fluoride-specific ion channel. Important for reducing fluoride concentration in the cell, thus reducing its toxicity. This chain is Fluoride-specific ion channel FluC 2, found in Symbiobacterium thermophilum (strain DSM 24528 / JCM 14929 / IAM 14863 / T).